The sequence spans 622 residues: Meiotic expression up-regulated protein 25 (622 aa).

This Schizosaccharomyces pombe (strain 972 / ATCC 24843) (Fission yeast) protein is Meiotic expression up-regulated protein 25 (meu25).